The sequence spans 318 residues: HPr kinase/phosphorylase (318 aa).

Active-site residues include H143 and K164. G158 to S165 provides a ligand contact to ATP. S165 is a binding site for Mg(2+). Catalysis depends on D182, which acts as the Proton acceptor; for phosphorylation activity. Proton donor; for dephosphorylation activity. The tract at residues M206–N215 is important for the catalytic mechanism of both phosphorylation and dephosphorylation. Position 207 (E207) interacts with Mg(2+). Residue R248 is part of the active site. Positions P269–R274 are important for the catalytic mechanism of dephosphorylation.

It belongs to the HPrK/P family. In terms of assembly, homohexamer. Requires Mg(2+) as cofactor.

It catalyses the reaction [HPr protein]-L-serine + ATP = [HPr protein]-O-phospho-L-serine + ADP + H(+). It carries out the reaction [HPr protein]-O-phospho-L-serine + phosphate + H(+) = [HPr protein]-L-serine + diphosphate. Functionally, catalyzes the ATP- as well as the pyrophosphate-dependent phosphorylation of a specific serine residue in HPr, a phosphocarrier protein of the phosphoenolpyruvate-dependent sugar phosphotransferase system (PTS). HprK/P also catalyzes the pyrophosphate-producing, inorganic phosphate-dependent dephosphorylation (phosphorolysis) of seryl-phosphorylated HPr (P-Ser-HPr). The chain is HPr kinase/phosphorylase from Leptospira borgpetersenii serovar Hardjo-bovis (strain JB197).